The following is a 138-amino-acid chain: Flagellar basal body rod protein FlgB (138 aa).

It belongs to the flagella basal body rod proteins family. The basal body constitutes a major portion of the flagellar organelle and consists of a number of rings mounted on a central rod. In Gram-negative bacteria, at least four rings, L, P, S and M are present, whereas Gram-positive bacteria lack the L and P rings. The rod consists of about 26 subunits of FlgG in the distal portion, and FlgB, FlgC and FlgF build up the proximal portion of the rod with about 6 subunits each. Rod assembly occurs by export via the flagellum-specific pathway of its constituent proteins and by their incorporation into the rod structure in the probable order of FlgB, FlgC, FlgF and FlgG. Another protein, FliE, also assembles onto the stable rod structure.

Its subcellular location is the bacterial flagellum basal body. In terms of biological role, structural component of flagellum, the bacterial motility apparatus. Part of the rod structure of flagellar basal body. The sequence is that of Flagellar basal body rod protein FlgB (flgB) from Escherichia coli (strain K12).